A 249-amino-acid chain; its full sequence is Triosephosphate isomerase (249 aa).

9–11 (NWK) lines the substrate pocket. Histidine 95 serves as the catalytic Electrophile. Glutamate 166 (proton acceptor) is an active-site residue. Substrate-binding positions include glycine 172, serine 211, and 232–233 (GG).

Belongs to the triosephosphate isomerase family. Homodimer.

It is found in the cytoplasm. It catalyses the reaction D-glyceraldehyde 3-phosphate = dihydroxyacetone phosphate. The protein operates within carbohydrate biosynthesis; gluconeogenesis. It participates in carbohydrate degradation; glycolysis; D-glyceraldehyde 3-phosphate from glycerone phosphate: step 1/1. Its function is as follows. Involved in the gluconeogenesis. Catalyzes stereospecifically the conversion of dihydroxyacetone phosphate (DHAP) to D-glyceraldehyde-3-phosphate (G3P). In Legionella pneumophila subsp. pneumophila (strain Philadelphia 1 / ATCC 33152 / DSM 7513), this protein is Triosephosphate isomerase.